We begin with the raw amino-acid sequence, 257 residues long: Zinc import ATP-binding protein ZnuC (257 aa).

An ABC transporter domain is found at 6 to 221; that stretch reads VRLEQITVAF…AFVETFGHQV (216 aa). 38–45 is an ATP binding site; the sequence is GPNGAGKT.

This sequence belongs to the ABC transporter superfamily. Zinc importer (TC 3.A.1.15.5) family. As to quaternary structure, the complex is composed of two ATP-binding proteins (ZnuC), two transmembrane proteins (ZnuB) and a solute-binding protein (ZnuA).

Its subcellular location is the cell inner membrane. It carries out the reaction Zn(2+)(out) + ATP(in) + H2O(in) = Zn(2+)(in) + ADP(in) + phosphate(in) + H(+)(in). Functionally, part of the ABC transporter complex ZnuABC involved in zinc import. Responsible for energy coupling to the transport system. The chain is Zinc import ATP-binding protein ZnuC from Marinobacter nauticus (strain ATCC 700491 / DSM 11845 / VT8) (Marinobacter aquaeolei).